Consider the following 101-residue polypeptide: Large ribosomal subunit protein uL24 (101 aa).

It belongs to the universal ribosomal protein uL24 family. In terms of assembly, part of the 50S ribosomal subunit.

In terms of biological role, one of two assembly initiator proteins, it binds directly to the 5'-end of the 23S rRNA, where it nucleates assembly of the 50S subunit. Functionally, one of the proteins that surrounds the polypeptide exit tunnel on the outside of the subunit. This Streptococcus thermophilus (strain ATCC BAA-491 / LMD-9) protein is Large ribosomal subunit protein uL24.